Consider the following 88-residue polypeptide: CRISPR-associated endoribonuclease Cas2 2 (88 aa).

D8 provides a ligand contact to Mg(2+).

The protein belongs to the CRISPR-associated endoribonuclease Cas2 protein family. As to quaternary structure, homodimer, forms a heterotetramer with a Cas1 homodimer. It depends on Mg(2+) as a cofactor.

Its function is as follows. CRISPR (clustered regularly interspaced short palindromic repeat), is an adaptive immune system that provides protection against mobile genetic elements (viruses, transposable elements and conjugative plasmids). CRISPR clusters contain sequences complementary to antecedent mobile elements and target invading nucleic acids. CRISPR clusters are transcribed and processed into CRISPR RNA (crRNA). Functions as a ssRNA-specific endoribonuclease. Involved in the integration of spacer DNA into the CRISPR cassette. The protein is CRISPR-associated endoribonuclease Cas2 2 (cas22) of Saccharolobus solfataricus (strain ATCC 35092 / DSM 1617 / JCM 11322 / P2) (Sulfolobus solfataricus).